Consider the following 313-residue polypeptide: Ribosomal RNA small subunit methyltransferase H (313 aa).

S-adenosyl-L-methionine contacts are provided by residues 35-37 (GGH), aspartate 55, phenylalanine 80, aspartate 102, and glutamine 109.

The protein belongs to the methyltransferase superfamily. RsmH family.

The protein localises to the cytoplasm. The catalysed reaction is cytidine(1402) in 16S rRNA + S-adenosyl-L-methionine = N(4)-methylcytidine(1402) in 16S rRNA + S-adenosyl-L-homocysteine + H(+). Specifically methylates the N4 position of cytidine in position 1402 (C1402) of 16S rRNA. The chain is Ribosomal RNA small subunit methyltransferase H from Shewanella violacea (strain JCM 10179 / CIP 106290 / LMG 19151 / DSS12).